A 105-amino-acid polypeptide reads, in one-letter code: Endoribonuclease MazF1 (105 aa).

The protein belongs to the PemK/MazF family. As to quaternary structure, forms a complex with cognate antitoxin MazE1.

In terms of biological role, toxic component of a type II toxin-antitoxin (TA) system. Acts as an endoribonuclease on single-strand RNA, cleaving between the first and second bases in the sequence UCGCU. Neutralized by coexpression with cognate antitoxin MazE1. The protein is Endoribonuclease MazF1 (mazF1) of Mycobacterium bovis (strain ATCC BAA-935 / AF2122/97).